We begin with the raw amino-acid sequence, 436 residues long: Histidine--tRNA ligase (436 aa).

It belongs to the class-II aminoacyl-tRNA synthetase family. In terms of assembly, homodimer.

It localises to the cytoplasm. The catalysed reaction is tRNA(His) + L-histidine + ATP = L-histidyl-tRNA(His) + AMP + diphosphate + H(+). This is Histidine--tRNA ligase from Prochlorococcus marinus (strain MIT 9313).